A 123-amino-acid chain; its full sequence is Large ribosomal subunit protein uL24 (123 aa).

It belongs to the universal ribosomal protein uL24 family. As to quaternary structure, part of the 50S ribosomal subunit.

Its function is as follows. One of two assembly initiator proteins, it binds directly to the 5'-end of the 23S rRNA, where it nucleates assembly of the 50S subunit. In terms of biological role, one of the proteins that surrounds the polypeptide exit tunnel on the outside of the subunit. This is Large ribosomal subunit protein uL24 from Solibacter usitatus (strain Ellin6076).